Here is a 104-residue protein sequence, read N- to C-terminus: Chemokine-like protein MC148 (104 aa).

In terms of assembly, interacts with host CXCL12.

Plays a role in antagonizing the chemotaxis of multiple leukocyte subsets induced by CC and CXC chemokines. Displaces the interaction between CXCL12 and CXCR4 and thereby inactivates the antiviral activity of host CXCL12. This is Chemokine-like protein MC148 (MC148) from Homo sapiens (Human).